Reading from the N-terminus, the 459-residue chain is MLRTEWIARRHGHANVSQMYYARQGLITEEVAYVAHRENLEPELVRSEVARGRLIIPANTNHPNLEPMGIGIATRCKVNANIGASPNASNLGEEVAKLELAVKYGADTVMDLSTGGGDLDAIRSAIIQASPVPIGTVPMYQALEAVHGNVEKLTPEHILDVIEKHAKQGVDYMTIHAGILIEHLPLTQGRLTGIVSRGGGILARWMLAHHKQNPLYTHFDEIINIFKKYDVSFSLGDSLRPGCQHDASDAAQFAELKTLGELTRRAWTHDVQVMVEGPGHVPMHQIEMNVRKQMQECSEAPFYVLGPLVTDIAPGYDHITSAIGAALAGWYGTAMLCYVTPKEHLGLPNAEDVRTGLIAYKIAAHAADIARGRPGARDRDDELSRARYNFDWNRQFELSLDPERAREYHDETLPADIYKSAEFCSMCGPKFCPMQTKIDSQALSELEAALKPQPVAAQE.

Substrate-binding positions include Asn81, Met110, Tyr140, His176, 196–198 (SRG), 237–240 (DSLR), and Glu276. His280 provides a ligand contact to Zn(2+). Tyr303 is a binding site for substrate. Residue His344 participates in Zn(2+) binding. The [4Fe-4S] cluster site is built by Cys424, Cys427, and Cys432.

Belongs to the ThiC family. It depends on [4Fe-4S] cluster as a cofactor.

The catalysed reaction is 5-amino-1-(5-phospho-beta-D-ribosyl)imidazole + S-adenosyl-L-methionine = 4-amino-2-methyl-5-(phosphooxymethyl)pyrimidine + CO + 5'-deoxyadenosine + formate + L-methionine + 3 H(+). It functions in the pathway cofactor biosynthesis; thiamine diphosphate biosynthesis. Functionally, catalyzes the synthesis of the hydroxymethylpyrimidine phosphate (HMP-P) moiety of thiamine from aminoimidazole ribotide (AIR) in a radical S-adenosyl-L-methionine (SAM)-dependent reaction. The polypeptide is Phosphomethylpyrimidine synthase (Gloeobacter violaceus (strain ATCC 29082 / PCC 7421)).